A 240-amino-acid chain; its full sequence is Lipoprotein-releasing system ATP-binding protein LolD (240 aa).

The ABC transporter domain maps to 15 to 240; sequence IRAESLGKTY…GLRELTSAEV (226 aa). An ATP-binding site is contributed by 51-58; sequence GASGAGKS.

It belongs to the ABC transporter superfamily. Lipoprotein translocase (TC 3.A.1.125) family. In terms of assembly, the complex is composed of two ATP-binding proteins (LolD) and two transmembrane proteins (LolC and LolE).

Its subcellular location is the cell inner membrane. Functionally, part of the ABC transporter complex LolCDE involved in the translocation of mature outer membrane-directed lipoproteins, from the inner membrane to the periplasmic chaperone, LolA. Responsible for the formation of the LolA-lipoprotein complex in an ATP-dependent manner. This chain is Lipoprotein-releasing system ATP-binding protein LolD, found in Xylella fastidiosa (strain Temecula1 / ATCC 700964).